The following is a 636-amino-acid chain: Probable Xaa-Pro aminopeptidase P (636 aa).

Positions 414, 425, 523, and 537 each coordinate Mn(2+).

The protein belongs to the peptidase M24B family. Requires Mn(2+) as cofactor.

It carries out the reaction Release of any N-terminal amino acid, including proline, that is linked to proline, even from a dipeptide or tripeptide.. Catalyzes the removal of a penultimate prolyl residue from the N-termini of peptides. The polypeptide is Probable Xaa-Pro aminopeptidase P (AMPP) (Ajellomyces capsulatus (strain H143) (Darling's disease fungus)).